Here is a 662-residue protein sequence, read N- to C-terminus: NADH-ubiquinone oxidoreductase chain 5 (662 aa).

16 helical membrane passes run 40 to 62, 77 to 99, 112 to 129, 133 to 155, 168 to 190, 200 to 222, 243 to 262, 272 to 294, 301 to 320, 325 to 347, 360 to 382, 408 to 430, 450 to 472, 510 to 529, 609 to 631, and 636 to 658; these read AALS…IVIG, LFDS…VHLY, RFFS…VLVA, YFIM…NFWY, LTVN…WVFG, VAPY…GAMA, VSAL…LMLR, TVLV…TGLL, VIAY…VGLS, ALFH…GAVI, GGLV…SLMA, TIAY…RLVS, APMI…GYIA, LLPA…LYHV, GVIT…LVFA, and VFNE…LPSS.

This sequence belongs to the complex I subunit 5 family.

The protein resides in the mitochondrion inner membrane. It catalyses the reaction a ubiquinone + NADH + 5 H(+)(in) = a ubiquinol + NAD(+) + 4 H(+)(out). Core subunit of the mitochondrial membrane respiratory chain NADH dehydrogenase (Complex I) that is believed to belong to the minimal assembly required for catalysis. Complex I functions in the transfer of electrons from NADH to the respiratory chain. The immediate electron acceptor for the enzyme is believed to be ubiquinone. This Cryptococcus neoformans var. grubii serotype A (strain H99 / ATCC 208821 / CBS 10515 / FGSC 9487) (Filobasidiella neoformans var. grubii) protein is NADH-ubiquinone oxidoreductase chain 5 (ND5).